The sequence spans 770 residues: Elongation factor G, mitochondrial (770 aa).

A mitochondrion-targeting transit peptide spans 1 to 24 (MLKLSFRSLTSRLPRLSTLVVRGY). The tr-type G domain occupies 57–353 (KQIRNIGISA…AVCDYLPNPS (297 aa)). GTP is bound by residues 66–73 (AHIDSGKT), 151–155 (DTPGH), and 205–208 (NKMD).

It belongs to the TRAFAC class translation factor GTPase superfamily. Classic translation factor GTPase family. EF-G/EF-2 subfamily.

It localises to the mitochondrion. It participates in protein biosynthesis; polypeptide chain elongation. Its function is as follows. Mitochondrial GTPase that catalyzes the GTP-dependent ribosomal translocation step during translation elongation. During this step, the ribosome changes from the pre-translocational (PRE) to the post-translocational (POST) state as the newly formed A-site-bound peptidyl-tRNA and P-site-bound deacylated tRNA move to the P and E sites, respectively. Catalyzes the coordinated movement of the two tRNA molecules, the mRNA and conformational changes in the ribosome. This Schizosaccharomyces pombe (strain 972 / ATCC 24843) (Fission yeast) protein is Elongation factor G, mitochondrial (mef1).